We begin with the raw amino-acid sequence, 105 residues long: MIASKFGIGQQVRHSLLGYLGVVVDIDPEYSLDEPSPDELAVNDELRAAPWYHVVMEDDEGQPVHTYLAEAQLSSETQDEHPEQPSMDELARTIRKQLQAPRLRN.

The segment at 74–105 (SSETQDEHPEQPSMDELARTIRKQLQAPRLRN) is disordered.

Belongs to the HspQ family.

Its subcellular location is the cytoplasm. Functionally, involved in the degradation of certain denaturated proteins, including DnaA, during heat shock stress. The chain is Heat shock protein HspQ from Citrobacter koseri (strain ATCC BAA-895 / CDC 4225-83 / SGSC4696).